The chain runs to 311 residues: Aspartate carbamoyltransferase catalytic subunit (311 aa).

2 residues coordinate carbamoyl phosphate: arginine 55 and threonine 56. Position 85 (lysine 85) interacts with L-aspartate. Arginine 106, histidine 135, and glutamine 138 together coordinate carbamoyl phosphate. Positions 168 and 230 each coordinate L-aspartate. Carbamoyl phosphate contacts are provided by leucine 268 and proline 269.

Belongs to the aspartate/ornithine carbamoyltransferase superfamily. ATCase family. In terms of assembly, heterododecamer (2C3:3R2) of six catalytic PyrB chains organized as two trimers (C3), and six regulatory PyrI chains organized as three dimers (R2).

The enzyme catalyses carbamoyl phosphate + L-aspartate = N-carbamoyl-L-aspartate + phosphate + H(+). Its pathway is pyrimidine metabolism; UMP biosynthesis via de novo pathway; (S)-dihydroorotate from bicarbonate: step 2/3. Its function is as follows. Catalyzes the condensation of carbamoyl phosphate and aspartate to form carbamoyl aspartate and inorganic phosphate, the committed step in the de novo pyrimidine nucleotide biosynthesis pathway. The sequence is that of Aspartate carbamoyltransferase catalytic subunit from Pectobacterium atrosepticum (strain SCRI 1043 / ATCC BAA-672) (Erwinia carotovora subsp. atroseptica).